The primary structure comprises 403 residues: Methylthioribose-1-phosphate isomerase (403 aa).

The Proton donor role is filled by Asp277.

The protein belongs to the eIF-2B alpha/beta/delta subunits family. MtnA subfamily.

Its subcellular location is the cytoplasm. It localises to the nucleus. The enzyme catalyses 5-(methylsulfanyl)-alpha-D-ribose 1-phosphate = 5-(methylsulfanyl)-D-ribulose 1-phosphate. The protein operates within amino-acid biosynthesis; L-methionine biosynthesis via salvage pathway; L-methionine from S-methyl-5-thio-alpha-D-ribose 1-phosphate: step 1/6. In terms of biological role, catalyzes the interconversion of methylthioribose-1-phosphate (MTR-1-P) into methylthioribulose-1-phosphate (MTRu-1-P). The sequence is that of Methylthioribose-1-phosphate isomerase from Lodderomyces elongisporus (strain ATCC 11503 / CBS 2605 / JCM 1781 / NBRC 1676 / NRRL YB-4239) (Yeast).